The following is a 245-amino-acid chain: Collagen triple helix repeat-containing protein 1 (245 aa).

The first 32 residues, 1–32, serve as a signal peptide directing secretion; that stretch reads MHPQGRAAPPQLLLGLFLVLLLLLQLSAPISA. A Collagen-like domain is found at 59–92; it reads QGPAGVPGRDGSPGANGIPGTPGIPGRDGFKGEK. The disordered stretch occupies residues 64 to 87; the sequence is VPGRDGSPGANGIPGTPGIPGRDG. Residue N188 is glycosylated (N-linked (GlcNAc...) asparagine).

In terms of processing, N-glycosylated.

It is found in the secreted. It localises to the extracellular space. The protein resides in the extracellular matrix. In terms of biological role, may act as a negative regulator of collagen matrix deposition. In Mus musculus (Mouse), this protein is Collagen triple helix repeat-containing protein 1 (Cthrc1).